Reading from the N-terminus, the 259-residue chain is MADS-box protein ZMM17 (259 aa).

The 61-residue stretch at 1–61 folds into the MADS-box domain; sequence MGRGKIEIKR…GKMFEYCSPA (61 aa). A K-box domain is found at 85–175; that stretch reads DQQILLEMTR…YRMINENQQA (91 aa). Residues 237-259 form a disordered region; that stretch reads PTQPNLQDPAAPCGGLHGHGLQL.

Strong expression in female inflorescences (ears), but also weak expression in male inflorescences (tassels). At early stages of the development of the female spiklet, expressed in all organ primordia but later restricted to the ovule and the developing silk. At very late stages of development, expression becomes restricted to parts of the silk.

It is found in the nucleus. Probable transcription factor. This chain is MADS-box protein ZMM17 (M17), found in Zea mays (Maize).